The following is a 319-amino-acid chain: MSSFKPSRFSTARLTGDAVTPKSIYLRRREFMIGLGAIAATGAASSAFADPLEAKTTAYKVDEKLTPQNAVTTYNNFYEFGTDKSDPSANSGSFKPLPWKLTVDGLVKQPKEFDVEELIAKMPLEERIYRMRCVEAWSMVIPWIGFPLSSLLSQVEPLGSAKYIAFTGVVRPDEMPGQTGLFQALNWPYVEGLRLDEAMHPLTILSVGLYGETLPNANGAPIRLVVPWKYGFKGIKAITRISFVEKQPPTSWNRQAANEYGFYANVNPAVDHPRWSQATERRIGEGGFFGSDRRPTLPFNGYGEEVASLYAGMDLKANY.

The tat-type signal signal peptide spans 1-54; sequence MSSFKPSRFSTARLTGDAVTPKSIYLRRREFMIGLGAIAATGAASSAFADPLEA. Residues asparagine 75, 78-79, cysteine 133, asparagine 218, arginine 223, and 234-236 each bind Mo-molybdopterin; these read YE and GIK.

This sequence belongs to the MsrP family. In terms of assembly, heterodimer of a catalytic subunit (MsrP) and a heme-binding subunit (MsrQ). It depends on Mo-molybdopterin as a cofactor. Predicted to be exported by the Tat system. The position of the signal peptide cleavage has not been experimentally proven.

Its subcellular location is the periplasm. It carries out the reaction L-methionyl-[protein] + a quinone + H2O = L-methionyl-(S)-S-oxide-[protein] + a quinol. The catalysed reaction is L-methionyl-[protein] + a quinone + H2O = L-methionyl-(R)-S-oxide-[protein] + a quinol. In terms of biological role, part of the MsrPQ system that repairs oxidized periplasmic proteins containing methionine sulfoxide residues (Met-O), using respiratory chain electrons. Thus protects these proteins from oxidative-stress damage caused by reactive species of oxygen and chlorine generated by the host defense mechanisms. MsrPQ is essential for the maintenance of envelope integrity under bleach stress, rescuing a wide series of structurally unrelated periplasmic proteins from methionine oxidation. The catalytic subunit MsrP is non-stereospecific, being able to reduce both (R-) and (S-) diastereoisomers of methionine sulfoxide. This Brucella melitensis biotype 1 (strain ATCC 23456 / CCUG 17765 / NCTC 10094 / 16M) protein is Protein-methionine-sulfoxide reductase catalytic subunit MsrP.